The chain runs to 776 residues: Endonuclease MutS2 (776 aa).

An ATP-binding site is contributed by 328 to 335 (GPNTGGKT). Residues 701–776 (LDLRGKRYEE…GSGATIVTFK (76 aa)) form the Smr domain.

It belongs to the DNA mismatch repair MutS family. MutS2 subfamily. As to quaternary structure, homodimer. Binds to stalled ribosomes, contacting rRNA.

Functionally, endonuclease that is involved in the suppression of homologous recombination and thus may have a key role in the control of bacterial genetic diversity. In terms of biological role, acts as a ribosome collision sensor, splitting the ribosome into its 2 subunits. Detects stalled/collided 70S ribosomes which it binds and splits by an ATP-hydrolysis driven conformational change. Acts upstream of the ribosome quality control system (RQC), a ribosome-associated complex that mediates the extraction of incompletely synthesized nascent chains from stalled ribosomes and their subsequent degradation. Probably generates substrates for RQC. In Streptococcus mutans serotype c (strain ATCC 700610 / UA159), this protein is Endonuclease MutS2.